The primary structure comprises 191 residues: Pyridoxal 5'-phosphate synthase subunit PdxT (191 aa).

An L-glutamine-binding site is contributed by 46–48 (GES). Cys-78 functions as the Nucleophile in the catalytic mechanism. Residues Arg-105 and 133-134 (IR) each bind L-glutamine. Residues His-169 and Glu-171 each act as charge relay system in the active site.

This sequence belongs to the glutaminase PdxT/SNO family. In terms of assembly, in the presence of PdxS, forms a dodecamer of heterodimers. Only shows activity in the heterodimer.

The catalysed reaction is aldehydo-D-ribose 5-phosphate + D-glyceraldehyde 3-phosphate + L-glutamine = pyridoxal 5'-phosphate + L-glutamate + phosphate + 3 H2O + H(+). The enzyme catalyses L-glutamine + H2O = L-glutamate + NH4(+). The protein operates within cofactor biosynthesis; pyridoxal 5'-phosphate biosynthesis. Its function is as follows. Catalyzes the hydrolysis of glutamine to glutamate and ammonia as part of the biosynthesis of pyridoxal 5'-phosphate. The resulting ammonia molecule is channeled to the active site of PdxS. This Brevibacillus brevis (strain 47 / JCM 6285 / NBRC 100599) protein is Pyridoxal 5'-phosphate synthase subunit PdxT.